A 392-amino-acid chain; its full sequence is NADH-quinone oxidoreductase subunit D 1 (392 aa).

The protein belongs to the complex I 49 kDa subunit family. As to quaternary structure, NDH-1 is composed of 14 different subunits. Subunits NuoB, C, D, E, F, and G constitute the peripheral sector of the complex.

The protein localises to the cell inner membrane. The catalysed reaction is a quinone + NADH + 5 H(+)(in) = a quinol + NAD(+) + 4 H(+)(out). In terms of biological role, NDH-1 shuttles electrons from NADH, via FMN and iron-sulfur (Fe-S) centers, to quinones in the respiratory chain. The immediate electron acceptor for the enzyme in this species is believed to be a menaquinone. Couples the redox reaction to proton translocation (for every two electrons transferred, four hydrogen ions are translocated across the cytoplasmic membrane), and thus conserves the redox energy in a proton gradient. The polypeptide is NADH-quinone oxidoreductase subunit D 1 (Cytophaga hutchinsonii (strain ATCC 33406 / DSM 1761 / CIP 103989 / NBRC 15051 / NCIMB 9469 / D465)).